The chain runs to 138 residues: ATP synthase epsilon chain (138 aa).

It belongs to the ATPase epsilon chain family. In terms of assembly, F-type ATPases have 2 components, CF(1) - the catalytic core - and CF(0) - the membrane proton channel. CF(1) has five subunits: alpha(3), beta(3), gamma(1), delta(1), epsilon(1). CF(0) has three main subunits: a, b and c.

It is found in the cell membrane. Functionally, produces ATP from ADP in the presence of a proton gradient across the membrane. The sequence is that of ATP synthase epsilon chain (atpC) from Buchnera aphidicola subsp. Schizaphis graminum (strain Sg).